A 258-amino-acid polypeptide reads, in one-letter code: Acetylglutamate kinase (258 aa).

Substrate is bound by residues 44 to 45 (GG), R66, and N158. ATP-binding positions include 181-186 (DVSGIL) and 209-211 (IIT).

This sequence belongs to the acetylglutamate kinase family. ArgB subfamily. As to quaternary structure, homodimer.

It localises to the cytoplasm. It catalyses the reaction N-acetyl-L-glutamate + ATP = N-acetyl-L-glutamyl 5-phosphate + ADP. It participates in amino-acid biosynthesis; L-arginine biosynthesis; N(2)-acetyl-L-ornithine from L-glutamate: step 2/4. Its function is as follows. Catalyzes the ATP-dependent phosphorylation of N-acetyl-L-glutamate. The polypeptide is Acetylglutamate kinase (Shigella flexneri serotype 5b (strain 8401)).